We begin with the raw amino-acid sequence, 206 residues long: LexA repressor (206 aa).

The H-T-H motif DNA-binding region spans 28-48 (VREIGEAVGLASSSTVHGHLD). Residues Ser128 and Lys166 each act as for autocatalytic cleavage activity in the active site.

It belongs to the peptidase S24 family. As to quaternary structure, homodimer.

It carries out the reaction Hydrolysis of Ala-|-Gly bond in repressor LexA.. Its function is as follows. Represses a number of genes involved in the response to DNA damage (SOS response), including recA and lexA. In the presence of single-stranded DNA, RecA interacts with LexA causing an autocatalytic cleavage which disrupts the DNA-binding part of LexA, leading to derepression of the SOS regulon and eventually DNA repair. In Exiguobacterium sp. (strain ATCC BAA-1283 / AT1b), this protein is LexA repressor.